The chain runs to 256 residues: Hydroxyacylglutathione hydrolase (256 aa).

His-53, His-55, Asp-57, His-58, His-111, Asp-128, and His-166 together coordinate Zn(2+).

This sequence belongs to the metallo-beta-lactamase superfamily. Glyoxalase II family. As to quaternary structure, monomer. Requires Zn(2+) as cofactor.

The enzyme catalyses an S-(2-hydroxyacyl)glutathione + H2O = a 2-hydroxy carboxylate + glutathione + H(+). Its pathway is secondary metabolite metabolism; methylglyoxal degradation; (R)-lactate from methylglyoxal: step 2/2. Its function is as follows. Thiolesterase that catalyzes the hydrolysis of S-D-lactoyl-glutathione to form glutathione and D-lactic acid. The sequence is that of Hydroxyacylglutathione hydrolase from Thiobacillus denitrificans (strain ATCC 25259 / T1).